Reading from the N-terminus, the 259-residue chain is Aspartate/glutamate leucyltransferase (259 aa).

Belongs to the R-transferase family. Bpt subfamily.

It is found in the cytoplasm. It carries out the reaction N-terminal L-glutamyl-[protein] + L-leucyl-tRNA(Leu) = N-terminal L-leucyl-L-glutamyl-[protein] + tRNA(Leu) + H(+). The catalysed reaction is N-terminal L-aspartyl-[protein] + L-leucyl-tRNA(Leu) = N-terminal L-leucyl-L-aspartyl-[protein] + tRNA(Leu) + H(+). Functionally, functions in the N-end rule pathway of protein degradation where it conjugates Leu from its aminoacyl-tRNA to the N-termini of proteins containing an N-terminal aspartate or glutamate. In Rhizobium meliloti (strain 1021) (Ensifer meliloti), this protein is Aspartate/glutamate leucyltransferase.